Here is a 321-residue protein sequence, read N- to C-terminus: Glucokinase (321 aa).

Residue 8–13 (GDVGGT) participates in ATP binding.

It belongs to the bacterial glucokinase family.

It is found in the cytoplasm. It carries out the reaction D-glucose + ATP = D-glucose 6-phosphate + ADP + H(+). In Tolumonas auensis (strain DSM 9187 / NBRC 110442 / TA 4), this protein is Glucokinase.